The primary structure comprises 472 residues: Adenylyl cyclase-associated protein 1 (472 aa).

Alanine 2 carries the N-acetylalanine modification. The residue at position 31 (tyrosine 31) is a Phosphotyrosine. A Phosphoserine modification is found at serine 34. Residue lysine 81 is modified to N6-acetyllysine. A disordered region spans residues 216–253; it reads ELSGLPSGPSAGSGPPPPPPGPPPPPVPTSSGSDDSAS. Residues 218–228 are compositionally biased toward low complexity; it reads SGLPSGPSAGS. Over residues 229–243 the composition is skewed to pro residues; the sequence is GPPPPPPGPPPPPVP. Low complexity predominate over residues 244-253; sequence TSSGSDDSAS. Lysine 287 carries the N6-methyllysine modification. 3 positions are modified to phosphoserine: serine 290, serine 295, and serine 301. Positions 290–312 are disordered; sequence SGLIRSGPKPFSASKPDPPKPVA. The C-CAP/cofactor C-like domain maps to 307–450; the sequence is PPKPVAKKEP…EGGDFNEFPV (144 aa). A Glycyl lysine isopeptide (Lys-Gly) (interchain with G-Cter in SUMO1) cross-link involves residue lysine 345.

This sequence belongs to the CAP family. Homodimer. Binds actin monomers.

Its subcellular location is the cell membrane. In terms of biological role, directly regulates filament dynamics and has been implicated in a number of complex developmental and morphological processes, including mRNA localization and the establishment of cell polarity. This Bos taurus (Bovine) protein is Adenylyl cyclase-associated protein 1 (CAP1).